The chain runs to 303 residues: N-acetyl-D-glucosamine kinase (303 aa).

Residues 4–11 and 133–140 each bind ATP; these read GFDIGGTK and GVGGGLIF. Residues His-157, Cys-177, Cys-179, and Cys-184 each coordinate Zn(2+).

It belongs to the ROK (NagC/XylR) family. NagK subfamily.

It carries out the reaction N-acetyl-D-glucosamine + ATP = N-acetyl-D-glucosamine 6-phosphate + ADP + H(+). It participates in cell wall biogenesis; peptidoglycan recycling. Its function is as follows. Catalyzes the phosphorylation of N-acetyl-D-glucosamine (GlcNAc) derived from cell-wall degradation, yielding GlcNAc-6-P. The chain is N-acetyl-D-glucosamine kinase from Escherichia coli (strain K12 / DH10B).